A 718-amino-acid polypeptide reads, in one-letter code: Cyclomaltodextrin glucanotransferase (718 aa).

A signal peptide spans 1-34 (MFQMAKRVLLSTTLTFSLLAGSALPFLPASAIYA). Positions 35 to 172 (DADTAVTNKQ…GIKIIIDFAP (138 aa)) are A1. Residues Asp-61, Asn-63, Asn-66, and Asn-67 each contribute to the Ca(2+) site. An intrachain disulfide couples Cys-77 to Cys-84. Ca(2+)-binding residues include Gly-85 and Asp-87. Residue 134-135 (YW) coordinates substrate. Asn-173 lines the Ca(2+) pocket. A b region spans residues 173–236 (NHTSPAMETD…NLYDLADLNH (64 aa)). Residue His-174 coordinates substrate. Ile-224 contributes to the Ca(2+) binding site. Substrate is bound at residue 227 to 230 (NLYD). Asp-233 contacts Ca(2+). The interval 237-440 (NNSTIDTYFK…LRKSNPAIAY (204 aa)) is A2. Arg-261 contacts substrate. Residue Asp-263 is the Nucleophile of the active site. Residue 266-267 (KH) participates in substrate binding. Residue His-267 participates in Ca(2+) binding. The active-site Proton donor is the Glu-291. Substrate is bound by residues His-361, Asp-405, and Arg-409. The c stretch occupies residues 441 to 528 (GSTQQRWINN…ATAVWQYTAS (88 aa)). The interval 529-614 (ETTPTIGHVG…SNAYNDFTIL (86 aa)) is d. Positions 532 to 612 (PTIGHVGPVM…VNSNAYNDFT (81 aa)) constitute an IPT/TIG domain. Positions 613 to 718 (ILSGDQVSVR…GTATVTINWQ (106 aa)) constitute a CBM20 domain. The tract at residues 615–718 (SGDQVSVRFV…GTATVTINWQ (104 aa)) is e.

This sequence belongs to the glycosyl hydrolase 13 family. In terms of assembly, monomer. Requires Ca(2+) as cofactor.

The protein localises to the secreted. The enzyme catalyses Cyclizes part of a (1-&gt;4)-alpha-D-glucan chain by formation of a (1-&gt;4)-alpha-D-glucosidic bond.. The polypeptide is Cyclomaltodextrin glucanotransferase (cgtA) (Bacillus licheniformis).